A 433-amino-acid chain; its full sequence is Dihydroorotase (433 aa).

Residues His63 and His65 each coordinate Zn(2+). Substrate contacts are provided by residues 65-67 and Asn97; that span reads HLR. Residues Asp155, His182, and His235 each coordinate Zn(2+). Asn283 serves as a coordination point for substrate. Asp310 contacts Zn(2+). Asp310 is a catalytic residue. His314 is a binding site for substrate.

Belongs to the metallo-dependent hydrolases superfamily. DHOase family. Class I DHOase subfamily. The cofactor is Zn(2+).

It carries out the reaction (S)-dihydroorotate + H2O = N-carbamoyl-L-aspartate + H(+). It participates in pyrimidine metabolism; UMP biosynthesis via de novo pathway; (S)-dihydroorotate from bicarbonate: step 3/3. Its function is as follows. Catalyzes the reversible cyclization of carbamoyl aspartate to dihydroorotate. This is Dihydroorotase from Anaeromyxobacter dehalogenans (strain 2CP-C).